A 315-amino-acid polypeptide reads, in one-letter code: Glutathione synthetase (315 aa).

The ATP-grasp domain maps to 125–310 (KLYTAWFADL…ITGMLMDAIE (186 aa)). ATP is bound at residue 151 to 207 (WEKHGDIIMKPLDGMGGASIFRVKEGDPNIGVIAETLTELGNRYCMAQNYLPAIKDG). Positions 281 and 283 each coordinate Mg(2+).

This sequence belongs to the prokaryotic GSH synthase family. Mg(2+) serves as cofactor. It depends on Mn(2+) as a cofactor.

The catalysed reaction is gamma-L-glutamyl-L-cysteine + glycine + ATP = glutathione + ADP + phosphate + H(+). Its pathway is sulfur metabolism; glutathione biosynthesis; glutathione from L-cysteine and L-glutamate: step 2/2. The polypeptide is Glutathione synthetase (Salmonella typhi).